Here is a 148-residue protein sequence, read N- to C-terminus: Large ribosomal subunit protein bL9 (148 aa).

This sequence belongs to the bacterial ribosomal protein bL9 family.

In terms of biological role, binds to the 23S rRNA. The protein is Large ribosomal subunit protein bL9 of Alkaliphilus oremlandii (strain OhILAs) (Clostridium oremlandii (strain OhILAs)).